A 357-amino-acid chain; its full sequence is Sorbitol dehydrogenase 2 (357 aa).

Cys43 is a binding site for Zn(2+). Position 49 (Tyr49) interacts with substrate. Residues His68 and Glu69 each coordinate Zn(2+). Substrate is bound at residue Glu154. NAD(+) is bound by residues Asp202, Lys207, 275–277, and 299–301; these read VGM and CFR. Substrate is bound by residues Arg301 and Tyr302.

Belongs to the zinc-containing alcohol dehydrogenase family. As to quaternary structure, homotetramer. Zn(2+) serves as cofactor.

The catalysed reaction is keto-D-fructose + NADH + H(+) = D-sorbitol + NAD(+). It carries out the reaction xylitol + NAD(+) = D-xylulose + NADH + H(+). Polyol dehydrogenase that catalyzes the reversible NAD(+)-dependent oxidation of various sugar alcohols. Is active with D-sorbitol (D-glucitol) and xylitol as substrates, leading to the C2-oxidized product D-fructose and D-xylulose, respectively. The polypeptide is Sorbitol dehydrogenase 2 (SOR2) (Saccharomyces cerevisiae (strain ATCC 204508 / S288c) (Baker's yeast)).